An 89-amino-acid polypeptide reads, in one-letter code: NAD(P)H-quinone oxidoreductase subunit L (89 aa).

2 helical membrane passes run 29–46 and 59–79; these read VLGG…FYWM and LFIY…APFL.

This sequence belongs to the complex I NdhL subunit family. As to quaternary structure, NDH-1 can be composed of about 15 different subunits; different subcomplexes with different compositions have been identified which probably have different functions.

Its subcellular location is the cellular thylakoid membrane. It catalyses the reaction a plastoquinone + NADH + (n+1) H(+)(in) = a plastoquinol + NAD(+) + n H(+)(out). It carries out the reaction a plastoquinone + NADPH + (n+1) H(+)(in) = a plastoquinol + NADP(+) + n H(+)(out). In terms of biological role, NDH-1 shuttles electrons from an unknown electron donor, via FMN and iron-sulfur (Fe-S) centers, to quinones in the respiratory and/or the photosynthetic chain. The immediate electron acceptor for the enzyme in this species is believed to be plastoquinone. Couples the redox reaction to proton translocation, and thus conserves the redox energy in a proton gradient. Cyanobacterial NDH-1 also plays a role in inorganic carbon-concentration. This Prochlorococcus marinus (strain NATL1A) protein is NAD(P)H-quinone oxidoreductase subunit L.